A 336-amino-acid chain; its full sequence is Protein ABHD13 (336 aa).

The chain crosses the membrane as a helical; Signal-anchor for type II membrane protein span at residues Phe37–Leu57. Catalysis depends on charge relay system residues Ser193, Asp268, and His298. Asn299 carries N-linked (GlcNAc...) asparagine glycosylation.

It belongs to the serine esterase family.

The protein resides in the membrane. This chain is Protein ABHD13, found in Xenopus laevis (African clawed frog).